A 324-amino-acid polypeptide reads, in one-letter code: Putative ribose-phosphate pyrophosphokinase 2 (324 aa).

ATP contacts are provided by residues 43–45 (DGE) and 102–103 (RQ). His-136 provides a ligand contact to Mg(2+). Residues Asp-225 and 229–233 (NTGKT) each bind D-ribose 5-phosphate.

Belongs to the ribose-phosphate pyrophosphokinase family. Class I subfamily. As to quaternary structure, homohexamer. Requires Mg(2+) as cofactor.

The protein resides in the cytoplasm. It catalyses the reaction D-ribose 5-phosphate + ATP = 5-phospho-alpha-D-ribose 1-diphosphate + AMP + H(+). The protein operates within metabolic intermediate biosynthesis; 5-phospho-alpha-D-ribose 1-diphosphate biosynthesis; 5-phospho-alpha-D-ribose 1-diphosphate from D-ribose 5-phosphate (route I): step 1/1. Involved in the biosynthesis of the central metabolite phospho-alpha-D-ribosyl-1-pyrophosphate (PRPP) via the transfer of pyrophosphoryl group from ATP to 1-hydroxyl of ribose-5-phosphate (Rib-5-P). The sequence is that of Putative ribose-phosphate pyrophosphokinase 2 from Streptococcus agalactiae serotype III (strain NEM316).